The following is a 298-amino-acid chain: MGDTWAQLPWPGPPHSALLLVFFLLAAGVMHSDAGASCPVLCTCRNQVVDCSNQRLFSVPPDLPMDTRNLSLAHNRIAAVPPGYLTCYMELRVLDLRNNSLMELPPGLFLHAKRLAHLDLSYNNLSHVPADMFREAHGLVHIDLSHNPWLRRVHPQAFQGLVHLRDLDLSYGGLAFLSLEALEGLPGLVTLQIGGNPWVCGCTMEPLLKWLRNRIQRCTADSQLAECRGPPEVEGAPLFSLTEESFKACHLTLTLDDYLFIAFVGFVVSIASVATNFLLGITANCCHRWSKANEEEEI.

A signal peptide spans 1-34 (MGDTWAQLPWPGPPHSALLLVFFLLAAGVMHSDA). An LRRNT domain is found at 35–65 (GASCPVLCTCRNQVVDCSNQRLFSVPPDLPM). Intrachain disulfides connect Cys-38–Cys-44 and Cys-42–Cys-51. 5 LRR repeats span residues 66–87 (DTRN…YLTC), 90–111 (ELRV…LFLH), 114–135 (RLAH…MFRE), 138–160 (GLVH…AFQG), and 163–186 (HLRD…EGLP). In terms of domain architecture, LRRCT spans 196–251 (NPWVCGCTMEPLLKWLRNRIQRCTADSQLAECRGPPEVEGAPLFSLTEESFKACHL). Disulfide bonds link Cys-200/Cys-227 and Cys-202/Cys-249. The helical transmembrane segment at 259–279 (LFIAFVGFVVSIASVATNFLL) threads the bilayer.

Interacts with KCNMA1.

It is found in the cell membrane. Functionally, auxiliary protein of the large-conductance, voltage and calcium-activated potassium channel (BK alpha). Modulates gating properties by producing a marked shift in the BK channel's voltage dependence of activation in the hyperpolarizing direction, and in the absence of calcium. The protein is Leucine-rich repeat-containing protein 55 (Lrrc55) of Rattus norvegicus (Rat).